We begin with the raw amino-acid sequence, 530 residues long: ATP synthase subunit alpha (530 aa).

Residue 172–179 (GDRQTGKT) coordinates ATP.

It belongs to the ATPase alpha/beta chains family. In terms of assembly, F-type ATPases have 2 components, CF(1) - the catalytic core - and CF(0) - the membrane proton channel. CF(1) has five subunits: alpha(3), beta(3), gamma(1), delta(1), epsilon(1). CF(0) has three main subunits: a(1), b(2) and c(9-12). The alpha and beta chains form an alternating ring which encloses part of the gamma chain. CF(1) is attached to CF(0) by a central stalk formed by the gamma and epsilon chains, while a peripheral stalk is formed by the delta and b chains.

Its subcellular location is the cell inner membrane. The enzyme catalyses ATP + H2O + 4 H(+)(in) = ADP + phosphate + 5 H(+)(out). Produces ATP from ADP in the presence of a proton gradient across the membrane. The alpha chain is a regulatory subunit. The sequence is that of ATP synthase subunit alpha from Phocaeicola vulgatus (strain ATCC 8482 / DSM 1447 / JCM 5826 / CCUG 4940 / NBRC 14291 / NCTC 11154) (Bacteroides vulgatus).